The following is a 350-amino-acid chain: Biotin synthase 1 (350 aa).

The Radical SAM core domain maps to 71–296; sequence EEVEVEGIIS…KTILRFAGGR (226 aa). Residues Cys86, Cys90, and Cys93 each coordinate [4Fe-4S] cluster. The [2Fe-2S] cluster site is built by Cys129, Cys221, and Arg291.

It belongs to the radical SAM superfamily. Biotin synthase family. In terms of assembly, homodimer. [4Fe-4S] cluster is required as a cofactor. Requires [2Fe-2S] cluster as cofactor.

The catalysed reaction is (4R,5S)-dethiobiotin + (sulfur carrier)-SH + 2 reduced [2Fe-2S]-[ferredoxin] + 2 S-adenosyl-L-methionine = (sulfur carrier)-H + biotin + 2 5'-deoxyadenosine + 2 L-methionine + 2 oxidized [2Fe-2S]-[ferredoxin]. Its pathway is cofactor biosynthesis; biotin biosynthesis; biotin from 7,8-diaminononanoate: step 2/2. Its function is as follows. Catalyzes the conversion of dethiobiotin (DTB) to biotin by the insertion of a sulfur atom into dethiobiotin via a radical-based mechanism. The sequence is that of Biotin synthase 1 from Corynebacterium diphtheriae (strain ATCC 700971 / NCTC 13129 / Biotype gravis).